We begin with the raw amino-acid sequence, 132 residues long: Mini-ribonuclease 3 (132 aa).

The active site involves Asp-17.

The protein belongs to the MrnC RNase family. As to quaternary structure, homodimer. Requires Mg(2+) as cofactor.

It is found in the cytoplasm. In terms of biological role, involved in correct processing of both the 5' and 3' ends of 23S rRNA precursor. Processes 30S rRNA precursor transcript even in absence of ribonuclease 3 (Rnc); Rnc processes 30S rRNA into smaller rRNA precursors. The sequence is that of Mini-ribonuclease 3 from Enterococcus faecalis (strain ATCC 700802 / V583).